The sequence spans 1227 residues: Tyrosine-protein kinase receptor ver-3 (1227 aa).

Residues 1 to 17 (MKLKLTVLLILVHASAS) form the signal peptide. Over 18–764 (YKPPAIEVED…VQVNNAPKGS (747 aa)) the chain is Extracellular. Residues 20-110 (PPAIEVEDYQ…RESDTGTYSC (91 aa)) form the Ig-like C2-type 1 domain. Cysteines 52 and 110 form a disulfide. N-linked (GlcNAc...) asparagine glycans are attached at residues N119, N211, N245, N255, N381, N425, and N528. The Ig-like C2-type 2 domain occupies 200 to 325 (VNFECRYKKE…EHENKETKYT (126 aa)). An intrachain disulfide couples C204 to C313. Ig-like C2-type domains follow at residues 565 to 666 (PHHE…TSID) and 673 to 758 (PSIT…VQVN). Disulfide bonds link C592–C650 and C696–C740. N-linked (GlcNAc...) asparagine glycosylation is present at N697. A helical transmembrane segment spans residues 765–785 (LFFYWFLALLLLISIIAVFLL). Topologically, residues 786-1227 (TCKLRASNRL…ERYLIVESHA (442 aa)) are cytoplasmic. The region spanning 847 to 1175 (LEILNPIGSG…HMRDSSSQFL (329 aa)) is the Protein kinase domain. Residues 853-861 (IGSGHFGVV) and K886 each bind ATP. D1030 acts as the Proton acceptor in catalysis. Residues 1194-1227 (DWIQDSRPDVPNVSFQKSPKKQKEERYLIVESHA) form a disordered region. Residues 1214–1227 (KQKEERYLIVESHA) are compositionally biased toward basic and acidic residues.

It belongs to the protein kinase superfamily. Tyr protein kinase family. In terms of tissue distribution, expressed in the ALA neuron.

The protein resides in the cell membrane. It catalyses the reaction L-tyrosyl-[protein] + ATP = O-phospho-L-tyrosyl-[protein] + ADP + H(+). Receptor tyrosine kinase which may be involved, downstream of pvf-1, in the positioning of ray 1, the most anterior ray sensillum in the male tail. In Caenorhabditis elegans, this protein is Tyrosine-protein kinase receptor ver-3.